We begin with the raw amino-acid sequence, 63 residues long: Large ribosomal subunit protein uL30 (63 aa).

The protein belongs to the universal ribosomal protein uL30 family. Part of the 50S ribosomal subunit.

The protein is Large ribosomal subunit protein uL30 of Hahella chejuensis (strain KCTC 2396).